The sequence spans 186 residues: Peptide deformylase (186 aa).

Fe cation is bound by residues Cys99 and His141. Residue Glu142 is part of the active site. A Fe cation-binding site is contributed by His145.

Belongs to the polypeptide deformylase family. Fe(2+) serves as cofactor.

The enzyme catalyses N-terminal N-formyl-L-methionyl-[peptide] + H2O = N-terminal L-methionyl-[peptide] + formate. Its function is as follows. Removes the formyl group from the N-terminal Met of newly synthesized proteins. Requires at least a dipeptide for an efficient rate of reaction. N-terminal L-methionine is a prerequisite for activity but the enzyme has broad specificity at other positions. This is Peptide deformylase from Chlamydia felis (strain Fe/C-56) (Chlamydophila felis).